We begin with the raw amino-acid sequence, 268 residues long: 4-hydroxy-tetrahydrodipicolinate reductase (268 aa).

NAD(+) is bound at residue 8–13 (GAAGRM). R36 is a binding site for NADP(+). NAD(+)-binding positions include 99–101 (GTT) and 123–126 (AANF). Catalysis depends on H156, which acts as the Proton donor/acceptor. H157 provides a ligand contact to (S)-2,3,4,5-tetrahydrodipicolinate. Residue K160 is the Proton donor of the active site. Residue 166–167 (GT) coordinates (S)-2,3,4,5-tetrahydrodipicolinate.

This sequence belongs to the DapB family.

It localises to the cytoplasm. It carries out the reaction (S)-2,3,4,5-tetrahydrodipicolinate + NAD(+) + H2O = (2S,4S)-4-hydroxy-2,3,4,5-tetrahydrodipicolinate + NADH + H(+). The catalysed reaction is (S)-2,3,4,5-tetrahydrodipicolinate + NADP(+) + H2O = (2S,4S)-4-hydroxy-2,3,4,5-tetrahydrodipicolinate + NADPH + H(+). It functions in the pathway amino-acid biosynthesis; L-lysine biosynthesis via DAP pathway; (S)-tetrahydrodipicolinate from L-aspartate: step 4/4. Catalyzes the conversion of 4-hydroxy-tetrahydrodipicolinate (HTPA) to tetrahydrodipicolinate. This chain is 4-hydroxy-tetrahydrodipicolinate reductase, found in Pseudomonas fluorescens (strain Pf0-1).